We begin with the raw amino-acid sequence, 160 residues long: Eosinophil cationic protein (160 aa).

Positions M1–A27 are cleaved as a signal peptide. A required for nearly all of the bactericidal activity; partially involved in LPS-binding and bacterial membrane depolarization region spans residues R28–R72. Residue H42 is the Proton acceptor of the active site. 4 disulfides stabilise this stretch: C50–C110, C64–C123, C82–C138, and C89–C98. The residue at position 60 (Y60) is a 3'-nitrotyrosine. K65–T69 is a binding site for substrate. Residues N84, N92, and N119 are each glycosylated (N-linked (GlcNAc...) asparagine). The active-site Proton donor is H155.

The protein belongs to the pancreatic ribonuclease family. Interacts with bacterial lipopolysaccharide (LPS) and lipoteichoic acid (LTA). In vitro interacts with and insert into lipid bilayers composed of dioleoyl phosphatidylcholine and dioleoyl phosphatidylglycerol. In vitro, tends to form amyloid-like aggregates at pH 3, but not at pH 5, nor 7.

The protein resides in the secreted. Its function is as follows. Cytotoxin and helminthotoxin with low-efficiency ribonuclease activity. Possesses a wide variety of biological activities. Exhibits antibacterial activity, including cytoplasmic membrane depolarization of preferentially Gram-negative, but also Gram-positive strains. Promotes E.coli outer membrane detachment, alteration of the overall cell shape and partial loss of cell content. In Homo sapiens (Human), this protein is Eosinophil cationic protein (RNASE3).